The sequence spans 520 residues: Cytosol aminopeptidase (520 aa).

Positions 200, 201, 280, and 285 each coordinate Zn(2+). Substrate is bound by residues K280, D285, S290, and K292. Mg(2+) is bound at residue D285. K292 is an active-site residue. Zn(2+)-binding residues include R301, D303, D362, and E364. Substrate-binding residues include D303 and D362. Residues D362 and E364 each contribute to the Mg(2+) site. R366 is an active-site residue.

Belongs to the peptidase M17 family. In terms of assembly, homohexamer. The cofactor is Zn(2+). Mn(2+) is required as a cofactor.

It is found in the cytoplasm. The enzyme catalyses Release of an N-terminal amino acid, Xaa-|-Yaa-, in which Xaa is preferably Leu, but may be other amino acids including Pro although not Arg or Lys, and Yaa may be Pro. Amino acid amides and methyl esters are also readily hydrolyzed, but rates on arylamides are exceedingly low.. The catalysed reaction is an S-substituted L-cysteinylglycine + H2O = an S-substituted L-cysteine + glycine. It carries out the reaction L-cysteinylglycine + H2O = L-cysteine + glycine. It catalyses the reaction S-benzyl-L-cysteinylglycine + H2O = S-benzyl-L-cysteine + glycine. The enzyme catalyses Release of N-terminal proline from a peptide.. Its function is as follows. Cytosolic metallopeptidase that catalyzes the removal of unsubstituted N-terminal hydrophobic amino acids from various peptides. The presence of Zn(2+) ions is essential for the peptidase activity, and the association with other cofactors can modulate the substrate spectificity of the enzyme. For instance, in the presence of Mn(2+), it displays a specific Cys-Gly hydrolyzing activity of Cys-Gly-S-conjugates. Involved in the metabolism of glutathione and in the degradation of glutathione S-conjugates, which may play a role in the control of the cell redox status. The polypeptide is Cytosol aminopeptidase (lap3) (Xenopus tropicalis (Western clawed frog)).